Here is a 370-residue protein sequence, read N- to C-terminus: Death-associated protein kinase 2 (370 aa).

One can recognise a Protein kinase domain in the interval 23-285 (YDIGEELGSG…IQEALRHPWI (263 aa)). ATP-binding positions include 29 to 37 (LGSGQFAIV) and Lys-52. Residue Asp-149 is the Proton acceptor of the active site. A calmodulin-binding region spans residues 277-344 (QEALRHPWIT…KVHLRPDEDL (68 aa)). Positions 292 to 301 (QAMVRRESVV) are autoinhibitory domain. The residue at position 299 (Ser-299) is a Phosphoserine. Phosphoserine; by autocatalysis is present on Ser-318. Residues 348–370 (ESDTEEDIARRKALHPRRRSSTS) are disordered. Ser-349 carries the phosphoserine modification. A compositionally biased stretch (basic residues) spans 358-370 (RKALHPRRRSSTS). Residue Thr-369 is modified to Phosphothreonine; by PKB/AKT1.

The protein belongs to the protein kinase superfamily. CAMK Ser/Thr protein kinase family. DAP kinase subfamily. As to quaternary structure, homodimer in its autoinhibited state. Active as monomer. Isoform 2 but not isoform 1 can interact with ATF4. Interacts with 14-3-3 proteins YWHAB, YWHAE, YWHAG, YWHAH, YWHAQ, YWHAZ and SFN; the interaction requires DAPK2 phosphorylation at Thr-369 and suppresses DAPK2 kinase activity and DAPK2-induced apoptosis. Requires Mg(2+) as cofactor. Post-translationally, autophosphorylation at Ser-318 inhibits its catalytic activity. Dephosphorylated at Ser-318 in response to activated Fas and TNF-alpha receptors. In terms of tissue distribution, expressed in neutrophils and eosinophils. Isoform 2 is expressed in embryonic stem cells (at protein level). Isoform 1 is ubiquitously expressed in all tissue types examined with high levels in heart, lung and skeletal muscle.

Its subcellular location is the cytoplasm. It localises to the cytoplasmic vesicle. The protein resides in the autophagosome lumen. It catalyses the reaction L-seryl-[protein] + ATP = O-phospho-L-seryl-[protein] + ADP + H(+). It carries out the reaction L-threonyl-[protein] + ATP = O-phospho-L-threonyl-[protein] + ADP + H(+). Its activity is regulated as follows. Activated by Ca(2+)/calmodulin. Regulated by a double locking mechanism, involving autophosphorylation at Ser-318, calmodulin binding, and dimerization. In the inactive state, Ser-318 is phosphorylated, and the kinase is dimeric. Activation involves: dephosphorylation at Ser-318, release-of-autoinhibition mechanism where calmodulin binding induces a conformational change that relieves the steric block of the active site by the autoinhibitory domain, and generation of the monomeric active form of the kinase. Functionally, calcium/calmodulin-dependent serine/threonine kinase involved in multiple cellular signaling pathways that trigger cell survival, apoptosis, and autophagy. Regulates both type I apoptotic and type II autophagic cell death signals, depending on the cellular setting. The former is caspase-dependent, while the latter is caspase-independent and is characterized by the accumulation of autophagic vesicles. Acts as a mediator of anoikis and a suppressor of beta-catenin-dependent anchorage-independent growth of malignant epithelial cells. May play a role in granulocytic maturation. Regulates granulocytic motility by controlling cell spreading and polarization. In terms of biological role, isoform 2 is not regulated by calmodulin. It can phosphorylate MYL9. It can induce membrane blebbing and autophagic cell death. The chain is Death-associated protein kinase 2 (DAPK2) from Homo sapiens (Human).